Consider the following 147-residue polypeptide: Cyanate hydratase (147 aa).

Active-site residues include Arg88, Glu91, and Ser114.

The protein belongs to the cyanase family.

It carries out the reaction cyanate + hydrogencarbonate + 3 H(+) = NH4(+) + 2 CO2. Its function is as follows. Catalyzes the reaction of cyanate with bicarbonate to produce ammonia and carbon dioxide. This Variovorax paradoxus (strain S110) protein is Cyanate hydratase.